The chain runs to 73 residues: Small ribosomal subunit protein bS18c (73 aa).

The protein belongs to the bacterial ribosomal protein bS18 family. As to quaternary structure, part of the 30S ribosomal subunit.

It is found in the plastid. The protein localises to the chloroplast. This is Small ribosomal subunit protein bS18c (rps18) from Guillardia theta (Cryptophyte).